Consider the following 338-residue polypeptide: Anthranilate phosphoribosyltransferase (338 aa).

Residues G81, 84–85 (GD), T89, 91–94 (NIST), 109–117 (KHGNRNLSS), and A121 each bind 5-phospho-alpha-D-ribose 1-diphosphate. G81 serves as a coordination point for anthranilate. S93 is a binding site for Mg(2+). Residue N112 coordinates anthranilate. Position 167 (R167) interacts with anthranilate. Positions 226 and 227 each coordinate Mg(2+).

It belongs to the anthranilate phosphoribosyltransferase family. As to quaternary structure, homodimer. Requires Mg(2+) as cofactor.

The catalysed reaction is N-(5-phospho-beta-D-ribosyl)anthranilate + diphosphate = 5-phospho-alpha-D-ribose 1-diphosphate + anthranilate. Its pathway is amino-acid biosynthesis; L-tryptophan biosynthesis; L-tryptophan from chorismate: step 2/5. In terms of biological role, catalyzes the transfer of the phosphoribosyl group of 5-phosphorylribose-1-pyrophosphate (PRPP) to anthranilate to yield N-(5'-phosphoribosyl)-anthranilate (PRA). The protein is Anthranilate phosphoribosyltransferase of Cereibacter sphaeroides (strain ATCC 17025 / ATH 2.4.3) (Rhodobacter sphaeroides).